A 325-amino-acid polypeptide reads, in one-letter code: Pyruvate dehydrogenase E1 component subunit beta (325 aa).

Residue Glu60 coordinates thiamine diphosphate.

Heterodimer of an alpha and a beta chain. Thiamine diphosphate serves as cofactor.

It carries out the reaction N(6)-[(R)-lipoyl]-L-lysyl-[protein] + pyruvate + H(+) = N(6)-[(R)-S(8)-acetyldihydrolipoyl]-L-lysyl-[protein] + CO2. The pyruvate dehydrogenase complex catalyzes the overall conversion of pyruvate to acetyl-CoA and CO(2). It contains multiple copies of three enzymatic components: pyruvate dehydrogenase (E1), dihydrolipoamide acetyltransferase (E2) and lipoamide dehydrogenase (E3). The sequence is that of Pyruvate dehydrogenase E1 component subunit beta (pdhB) from Staphylococcus epidermidis (strain ATCC 35984 / DSM 28319 / BCRC 17069 / CCUG 31568 / BM 3577 / RP62A).